Reading from the N-terminus, the 550-residue chain is Hydroxylamine reductase (550 aa).

The [2Fe-2S] cluster site is built by Cys3, Cys6, Cys18, and Cys25. His249, Glu273, Cys317, Cys405, Cys433, Cys458, Glu492, and Lys494 together coordinate hybrid [4Fe-2O-2S] cluster. Cys405 bears the Cysteine persulfide mark.

Belongs to the HCP family. Requires [2Fe-2S] cluster as cofactor. Hybrid [4Fe-2O-2S] cluster serves as cofactor.

The protein resides in the cytoplasm. It carries out the reaction A + NH4(+) + H2O = hydroxylamine + AH2 + H(+). Its function is as follows. Catalyzes the reduction of hydroxylamine to form NH(3) and H(2)O. The polypeptide is Hydroxylamine reductase (Escherichia coli O139:H28 (strain E24377A / ETEC)).